A 734-amino-acid polypeptide reads, in one-letter code: Diacylglycerol kinase alpha (734 aa).

EF-hand domains lie at 109-144 and 154-189; these read RPED…MMRM and ELRP…TVPL. The Ca(2+) site is built by Asp122, Asp124, Asn126, Glu133, Asp167, Asp169, Ser171, Ser173, and Glu178. 2 consecutive Phorbol-ester/DAG-type zinc fingers follow at residues 204 to 252 and 268 to 318; these read QHMW…ALPC and THVW…GHEC. The interval 358 to 505 is necessary and sufficient for the diacylglycerol kinase activity; it reads NLSTSEALRI…MDRWSVEVIP (148 aa). The 135-residue stretch at 371-505 folds into the DAGKc domain; that stretch reads SNTHPLLVFV…MDRWSVEVIP (135 aa). Lys483 is subject to N6-acetyllysine.

It belongs to the eukaryotic diacylglycerol kinase family. Monomer.

The protein resides in the cytoplasm. Its subcellular location is the cytosol. It catalyses the reaction a 1,2-diacyl-sn-glycerol + ATP = a 1,2-diacyl-sn-glycero-3-phosphate + ADP + H(+). The catalysed reaction is a 1-O-alkyl-sn-glycerol + ATP = a 1-O-alkyl-sn-glycero-3-phosphate + ADP + H(+). The enzyme catalyses 1-O-alkyl-2-acyl-sn-glycerol + ATP = 1-O-alkyl-2-acyl-sn-glycero-3-phosphate + ADP + H(+). It carries out the reaction 1,2-dihexadecanoyl-sn-glycerol + ATP = 1,2-dihexadecanoyl-sn-glycero-3-phosphate + ADP + H(+). It catalyses the reaction 1-hexadecanoyl-2-(9Z-octadecenoyl)-sn-glycerol + ATP = 1-hexadecanoyl-2-(9Z-octadecenoyl)-sn-glycero-3-phosphate + ADP + H(+). The catalysed reaction is 2-(9Z-octadecenoyl)-glycerol + ATP = 2-(9Z-octadecenoyl)-sn-glycero-3-phosphate + ADP + H(+). The enzyme catalyses 1,2-di-(9Z-octadecenoyl)-sn-glycerol + ATP = 1,2-di-(9Z-octadecenoyl)-sn-glycero-3-phosphate + ADP + H(+). It carries out the reaction 1-octadecanoyl-2-(5Z,8Z,11Z,14Z-eicosatetraenoyl)-sn-glycerol + ATP = 1-octadecanoyl-2-(5Z,8Z,11Z,14Z-eicosatetraenoyl)-sn-glycero-3-phosphate + ADP + H(+). It catalyses the reaction 1,2-didecanoyl-sn-glycerol + ATP = 1,2-didecanoyl-sn-glycero-3-phosphate + ADP + H(+). The catalysed reaction is 1-O-hexadecyl-2-acetyl-sn-glycerol + ATP = 1-O-hexadecyl-2-acetyl-sn-glycero-3-phosphate + ADP + H(+). The enzyme catalyses 1-O-hexadecyl-2-(5Z,8Z,11Z,14Z-eicosatetraenoyl)-sn-glycerol + ATP = 1-O-hexadecyl-2-(5Z,8Z,11Z,14Z-eicosatetraenoyl)-sn-glycero-3-phosphate + ADP + H(+). It carries out the reaction 1-O-hexadecyl-2-(9Z-octadecenoyl)-sn-glycerol + ATP = 1-O-hexadecyl-2-(9Z-octadecenoyl)-sn-glycero-3-phosphate + ADP + H(+). It catalyses the reaction 1-O-hexadecyl-sn-glycerol + ATP = 1-O-hexadecyl-sn-glycero-3-phosphate + ADP + H(+). It participates in lipid metabolism; glycerolipid metabolism. Its activity is regulated as follows. Stimulated by calcium and phosphatidylserine. In terms of biological role, diacylglycerol kinase that converts diacylglycerol/DAG into phosphatidic acid/phosphatidate/PA and regulates the respective levels of these two bioactive lipids. Thereby, acts as a central switch between the signaling pathways activated by these second messengers with different cellular targets and opposite effects in numerous biological processes. Also plays an important role in the biosynthesis of complex lipids. Can also phosphorylate 1-alkyl-2-acylglycerol in vitro as efficiently as diacylglycerol provided it contains an arachidonoyl group. Also involved in the production of alkyl-lysophosphatidic acid, another bioactive lipid, through the phosphorylation of 1-alkyl-2-acetyl glycerol. This chain is Diacylglycerol kinase alpha (DGKA), found in Sus scrofa (Pig).